Reading from the N-terminus, the 145-residue chain is MAFDKLGRFFGISNDDELANDEEYTTQNEENNEDLPLNSINRDNVVSIKSGLNSSKSKIVLYEPRVYSDAKDVAQNLLNNKAVVINFSRMEDSSARRIVDFITGTVYTLNGEIQRIGDKIFLATPPKFVTDGKISDLVDKKDNLS.

This sequence belongs to the SepF family. As to quaternary structure, homodimer. Interacts with FtsZ.

It is found in the cytoplasm. In terms of biological role, cell division protein that is part of the divisome complex and is recruited early to the Z-ring. Probably stimulates Z-ring formation, perhaps through the cross-linking of FtsZ protofilaments. Its function overlaps with FtsA. This Lactobacillus acidophilus (strain ATCC 700396 / NCK56 / N2 / NCFM) protein is Cell division protein SepF.